We begin with the raw amino-acid sequence, 937 residues long: MVCPNGYDPGGRHLLLFIIILAAWEAGRGQLHYSVPEEAKHGNFVGRIAQDLGLELAELVPRLFRAVCKFRGDLLEVNLQNGILFVNSRIDREELCGRSAECSIHLEVIVERPLQVFHVDVEVKDINDNPPVFPATQRNLFIAESRPLDSRFPLEGASDADIGENALLTYRLSPNEYFFLDVPTSNQQVKPLGLVLRKLLDREETPELHLLLTATDGGKPELTGTVQLLITVLDNNDNAPVFDRTLYTVKLPENVSIGTLVIHPNASDLDEGLNGDIIYSFSSDVSPDIKSKFHMDPLSGAITVIGHMDFEESRAHKIPVEAVDKGFPPLAGHCTVLVEVVDVNDNAPQLTLTSLSLPIPEDAQPGTVITLISVFDRDFGVNGQVTCSLTPRVPFKLVSTFKNYYSLVLDSALDRESVSAYELVVTARDGGSPSLWATASVSVEVADVNDNAPAFAQPEYTVFVKENNPPGCHIFTVSAGDADAQKNALVSYSLVELRVGERALSSYVSVHAESGKVYALQPLDHEELELLQFQVSARDAGVPPLGSNVTLQVFVLDENDNAPALLAPRVGGTGGAVRELVPRSVGAGHVVAKVRAVDADSGYNAWLSYELQPVAAGASIPFRVGLYTGEISTTRALDETDAPRHRLLVLVKDHGEPSLTATATVLVSLVESGQAPKASSRASLGIAGPETELVDVNVYLIIAICAVSSLLVLTLLLYTALRCSAPSSEGACSLVKPTLVCSSAVGSWSFSQQRRQRVCSGEGPPKTDLMAFSPSLPQGPSSTDNPRQPNPDWRYSASLRAGMHSSVHLEEAGILRAGPGGPDQQWPTVSSATPEPEAGEVSPPVGAGVNSNSWTFKYGPGNPKQSGPGELPDKFIIPGSPAIISIRQEPTNSQIDKSDFITFGKKEETKKKKKKKKGNKTQEKKEKGNSTTDNSDQ.

Positions 1 to 29 are cleaved as a signal peptide; sequence MVCPNGYDPGGRHLLLFIIILAAWEAGRG. Cadherin domains lie at 30 to 133, 134 to 242, 243 to 350, 351 to 455, 456 to 565, and 581 to 678; these read QLHY…PPVF, PATQ…APVF, DRTL…APQL, TLTS…APAF, AQPE…APAL, and VPRS…APKA. The Extracellular segment spans residues 30–697; that stretch reads QLHYSVPEEA…GPETELVDVN (668 aa). An intrachain disulfide couples cysteine 96 to cysteine 102. 2 N-linked (GlcNAc...) asparagine glycosylation sites follow: asparagine 254 and asparagine 265. An N-linked (GlcNAc...) asparagine glycan is attached at asparagine 548. The chain crosses the membrane as a helical span at residues 698–718; sequence VYLIIAICAVSSLLVLTLLLY. Over 719-937 the chain is Cytoplasmic; sequence TALRCSAPSS…GNSTTDNSDQ (219 aa). Disordered stretches follow at residues 755-795 and 814-937; these read RQRV…DWRY and ILRA…NSDQ. PXXP repeat units follow at residues 774–777, 786–789, 819–822, 860–863, and 878–881; these read PSLP, PRQP, PGGP, PGNP, and PGSP. Residues 774–881 are 5 X 4 AA repeats of P-X-X-P; the sequence is PSLPQGPSST…PDKFIIPGSP (108 aa). A compositionally biased stretch (polar residues) spans 775–787; the sequence is SLPQGPSSTDNPR. Over residues 896–910 the composition is skewed to basic and acidic residues; sequence DKSDFITFGKKEETK.

Forms homodimers in trans (molecules expressed by two different cells). Forms promiscuous heterodimers in cis (at the plasma membrane of the same cell) with other protocadherins.

It is found in the cell membrane. Its function is as follows. Calcium-dependent cell-adhesion protein involved in cells self-recognition and non-self discrimination. Thereby, it is involved in the establishment and maintenance of specific neuronal connections in the brain. The chain is Protocadherin alpha-7 from Homo sapiens (Human).